The primary structure comprises 231 residues: ATP phosphoribosyltransferase (231 aa).

The protein belongs to the ATP phosphoribosyltransferase family. Short subfamily. In terms of assembly, heteromultimer composed of HisG and HisZ subunits.

Its subcellular location is the cytoplasm. It catalyses the reaction 1-(5-phospho-beta-D-ribosyl)-ATP + diphosphate = 5-phospho-alpha-D-ribose 1-diphosphate + ATP. The protein operates within amino-acid biosynthesis; L-histidine biosynthesis; L-histidine from 5-phospho-alpha-D-ribose 1-diphosphate: step 1/9. In terms of biological role, catalyzes the condensation of ATP and 5-phosphoribose 1-diphosphate to form N'-(5'-phosphoribosyl)-ATP (PR-ATP). Has a crucial role in the pathway because the rate of histidine biosynthesis seems to be controlled primarily by regulation of HisG enzymatic activity. In Brucella suis (strain ATCC 23445 / NCTC 10510), this protein is ATP phosphoribosyltransferase.